Here is a 117-residue protein sequence, read N- to C-terminus: Large ribosomal subunit protein eL8 (117 aa).

It belongs to the eukaryotic ribosomal protein eL8 family. Part of the 50S ribosomal subunit. Probably part of the RNase P complex.

The protein resides in the cytoplasm. Functionally, multifunctional RNA-binding protein that recognizes the K-turn motif in ribosomal RNA, the RNA component of RNase P, box H/ACA, box C/D and box C'/D' sRNAs. This Methanococcus aeolicus (strain ATCC BAA-1280 / DSM 17508 / OCM 812 / Nankai-3) protein is Large ribosomal subunit protein eL8.